The chain runs to 508 residues: O-acetyltransferase pigM (508 aa).

Residues 166–188 are disordered; that stretch reads TPAPDERGKISPSLEDAAGSPRT.

It functions in the pathway secondary metabolite biosynthesis. In terms of biological role, O-acetyltransferase; part of the gene cluster that mediates the biosynthesis of azaphilone pigments (MonAzPs), a complex mixture of compounds with a common azaphilone skeleton very widely used as food colorants. PigM and pigO are involved in the elimination of the omega-1 alcohol with pigM acting as an O-acetyltransferase that synthesizes the O-11 acetyl intermediate whereas pigO eliminates acetic acid to yield an intermediate with a C10(11) double bond. The first step of the pathway is performed by the nrPKS pigA that forms the hexaketide precursor from successive condensations of five malonyl-CoA units, with a simple acetyl-CoA starter unit. The role of esterase pigG is not clear, but it may play at most a supplementary role in the formation of the benzaldehyde produced by the pigA nrPKS. This very reactive benzaldehyde is intercepted by the pigC ketoreductase that to provide the first stable enzyme-free MonAzPs intermediate, 6-(4-hydroxy-2-oxopentyl)-3-methyl-2,4-dioxocyclohexane carbaldehyde, also known as M7PKS-1. The FAD-dependent monooxygenase pigN hydroxylates M7PKS-1 at C-4, which triggers the formation of the pyran ring. PigJ, pigK and pigD are involved in the acetylation of the pyran ring. PigJ and pigK form the two subunits of a dedicated fungal FAS that produces the side chain fatty acyl moiety of MonAzPs and pigD transfers the fatty acyl chain to the C-4 alcohol. PigM and pigO are involved in the elimination of the omega-1 alcohol. PigM acts as an O-acetyltransferase that synthesizes the putative O-11 acetyl intermediate whereas pigO eliminates acetic acid to yield an intermediate with a C10(11) double bond. The dehydration of the C-11 alcohol followed by the reduction of the C6(7) double bond by the NAD(P)H-dependent oxidoreductase pigE increases the electrophilicity of the C-5 ketone of the resulting acyl benzopyran. This in turn sets up the C-5 ketone for an intramolecular Knoevenagel aldol condensation with the C-20 enol of the side chain. This condensation affords the characteristic linear tricyclic carbon skeletons of the yellow pigments that serve as the common precursors for the classical yellow pigments monascin and ankaflavin, orange pigments rubopunctatin and monascorubrin, and red pigments ribropunctamine and monascorubramine. The FAD-dependent oxidoreductase pigF is especially invoved in the biosynthesis of orange and red pigments via desaturation of C6(7). The sequence is that of O-acetyltransferase pigM from Monascus ruber (Mold).